Reading from the N-terminus, the 371-residue chain is Putative F-box protein At1g58090 (371 aa).

The F-box domain maps to 1–46 (MVSKKLPLDLEEEILFRVPPRSLVRFRSVCREWNTLFKNKRFINKN).

The chain is Putative F-box protein At1g58090 from Arabidopsis thaliana (Mouse-ear cress).